The sequence spans 603 residues: Linalool synthase Tps-5031L19, chloroplastic (603 aa).

The N-terminal 36 residues, 1–36 (MSSMRTYVAIMKKPSVEHVDNVDKKASKPSWRVSLS), are a transit peptide targeting the chloroplast. 5 residues coordinate (2E)-geranyl diphosphate: R322, D359, D363, R500, and D503. Residues D359 and D363 each coordinate Mg(2+). Residues 359–363 (DDVYD) carry the DDXXD motif motif. Mg(2+) contacts are provided by D503, T507, and E511.

Belongs to the terpene synthase family. Tpsb subfamily. In terms of assembly, monomer. Mg(2+) serves as cofactor. The cofactor is Mn(2+).

The protein resides in the plastid. It localises to the chloroplast. It carries out the reaction (2E)-geranyl diphosphate + H2O = linalool + diphosphate. It functions in the pathway secondary metabolite biosynthesis; terpenoid biosynthesis. Monoterpene synthase (mono-TPS) involved in the biosynthesis of monoterpenes natural products. Catalyzes the conversion of (2E)-geranyl diphosphate (GPP) into linalool. The protein is Linalool synthase Tps-5031L19, chloroplastic of Perilla frutescens var. hirtella (Perilla citriodora).